Here is a 232-residue protein sequence, read N- to C-terminus: MTMAETGAPPSALALFAWLSPGFPVGAYAYSHALEWAAEAGDITDESSLESWLRDLMLLGFGRADGILLAHAYGAGAAGDVPALAQVNARAVALSPTAELRLETCQQGRSFLDAVRAAWPHGGLDAAAAHLPPDVAYPVAVGYAAALHGVPRAAVLEAYLFAVTQTLVSAALRIAPIGQTAGTRVVARLMPAVQALAGDIPTLTLDDLGTATFRADLGSMRHETQYTRLFRS.

This sequence belongs to the UreF family. In terms of assembly, ureD, UreF and UreG form a complex that acts as a GTP-hydrolysis-dependent molecular chaperone, activating the urease apoprotein by helping to assemble the nickel containing metallocenter of UreC. The UreE protein probably delivers the nickel.

It localises to the cytoplasm. In terms of biological role, required for maturation of urease via the functional incorporation of the urease nickel metallocenter. The chain is Urease accessory protein UreF from Azorhizobium caulinodans (strain ATCC 43989 / DSM 5975 / JCM 20966 / LMG 6465 / NBRC 14845 / NCIMB 13405 / ORS 571).